Here is a 114-residue protein sequence, read N- to C-terminus: Nuclear transition protein 2 (114 aa).

Residues 1–114 (MDTKMQSLPT…KRRSSGRRYK (114 aa)) form a disordered region. Zn(2+) is bound by residues His-12, His-14, His-16, His-24, Cys-29, Cys-31, Cys-35, and Cys-38. Residues 16 to 25 (HSSSRPQSHT) show a composition bias toward low complexity. The Nuclear localization signal motif lies at 87–95 (GKVSKRKAV). Residues 90 to 114 (SKRKAVRRRKRTHRAKRRSSGRRYK) are compositionally biased toward basic residues. Thr-101 is subject to Phosphothreonine; by PKA. Ser-109 is subject to Phosphoserine; by PKA.

The protein belongs to the nuclear transition protein 2 family. In terms of tissue distribution, testis.

The protein resides in the nucleus. It localises to the nucleolus. Its subcellular location is the chromosome. Its function is as follows. Plays a key role in the replacement of histones to protamine in the elongating spermatids of mammals. In condensing spermatids, loaded onto the nucleosomes, where it promotes the recruitment and processing of protamines, which are responsible for histone eviction. The sequence is that of Nuclear transition protein 2 (Tnp2) from Rattus norvegicus (Rat).